We begin with the raw amino-acid sequence, 557 residues long: Isocitrate lyase (557 aa).

The residue at position 53 (Thr53) is a Phosphothreonine. Residue 106–108 (SGW) participates in substrate binding. Residue Asp179 participates in Mg(2+) binding. Catalysis depends on Cys217, which acts as the Proton acceptor. Substrate contacts are provided by residues 218–219 (GH), Arg254, 437–441 (NLSPS), and Thr471.

This sequence belongs to the isocitrate lyase/PEP mutase superfamily. Isocitrate lyase family. In terms of assembly, homotetramer. Mg(2+) serves as cofactor. Post-translationally, phosphorylated in response to elevated glucose levels, leading first to reversible inactivation of the enzyme (short-term inactivation), and at a later stage to proteolytic degradation of the protein (long-term inactivation).

The protein localises to the cytoplasm. The protein resides in the secreted. Its subcellular location is the extracellular space. It localises to the extracellular matrix. It is found in the vacuole. The enzyme catalyses D-threo-isocitrate = glyoxylate + succinate. The catalysed reaction is (2S,3R)-3-hydroxybutane-1,2,3-tricarboxylate = pyruvate + succinate. Its pathway is carbohydrate metabolism; glyoxylate cycle; (S)-malate from isocitrate: step 1/2. With respect to regulation, phosphorylated and inactivated after addition of glucose to the cell culture (repressing conditions). Its function is as follows. Catalyzes the formation of succinate and glyoxylate from isocitrate, a key step of the glyoxylate cycle, which operates as an anaplerotic route for replenishing the tricarboxylic acid cycle. Required for growth on ethanol or acetate, but dispensable when fermentable carbon sources are available. Also acts on 2-methylisocitrate. This chain is Isocitrate lyase, found in Saccharomyces cerevisiae (strain ATCC 204508 / S288c) (Baker's yeast).